A 609-amino-acid polypeptide reads, in one-letter code: RAS guanyl-releasing protein 2 (609 aa).

Ala2 carries the N-myristoyl glycine lipid modification. Residues 4–126 (TLDLDKGCTV…SLIDIDSVPT (123 aa)) form the N-terminal Ras-GEF domain. A lipid anchor (S-palmitoyl cysteine) is attached at Leu7. Residues Ser116, Ser117, and Ser147 each carry the phosphoserine modification. The Ras-GEF domain occupies 154-387 (EPMELAEHLT…YQLSLQREPR (234 aa)). The tract at residues 382 to 406 (LQREPRSKSSPTSPTSCTPPPRPPV) is disordered. 2 consecutive EF-hand domains span residues 426–461 (HIEKMVESVFRNFDVDGDGHISQEEFQIIRGNFPYL) and 455–490 (RGNFPYLSAFGDLDQNQDGCISREEMVSYFLRSSSV). Positions 439, 441, 443, 445, 450, 468, 470, 472, 474, and 479 each coordinate Ca(2+). The Phorbol-ester/DAG-type zinc-finger motif lies at 498–548 (VHNFQESNSLRPVACRHCKALILGIYKQGLKCRACGVNCHKQCKDRLSVEC). Phosphoserine is present on residues Ser554 and Ser576. The interval 557 to 592 (LEGSAPSPSPMHSHHHRAFSFSLPRPGRRGSRPPEI) is disordered.

It belongs to the RASGRP family. Forms a signaling complex with RAP1 and BRAF. Interacts with RAP1. Interacts with F-actin. In terms of processing, isoform 2 is palmitoylated and myristoylated. Detected in platelets, neutrophils and T lymphocytes (at protein level). Expressed in brain where it is enriched in the striatum. Also expressed in the hematopoietic system. Detected in heart, brain, lung, placenta, liver, skeletal muscle and kidney.

The protein resides in the cytoplasm. The protein localises to the cytosol. It is found in the cell membrane. Its subcellular location is the synapse. It localises to the synaptosome. The protein resides in the cell projection. The protein localises to the ruffle membrane. Its activity is regulated as follows. Isoform 1 and isoform 2 are differently regulated by calcium and DAG. Functionally, functions as a calcium- and DAG-regulated nucleotide exchange factor specifically activating Rap through the exchange of bound GDP for GTP. May also activate other GTPases such as RRAS, RRAS2, NRAS, KRAS but not HRAS. Functions in aggregation of platelets and adhesion of T-lymphocytes and neutrophils probably through inside-out integrin activation. May function in the muscarinic acetylcholine receptor M1/CHRM1 signaling pathway. In Homo sapiens (Human), this protein is RAS guanyl-releasing protein 2 (RASGRP2).